A 362-amino-acid chain; its full sequence is Putative membrane-bound acyltransferase YfiQ (362 aa).

10 consecutive transmembrane segments (helical) span residues 11 to 31 (CISCLSVVLLHIISMVLMLQA), 44 to 64 (FRTLLMFSTPAFIFISEFLLA), 82 to 102 (VIFVPFLFIAAIDALLMTSAM), 119 to 139 (VFLGNFIGYFILVIFQFYMLH), 153 to 173 (WVLSISFVVTAAYLGYFSAAS), 181 to 201 (GGAFPFFWVPFAGWLFYFCLA), 220 to 240 (WVVYGAAIASGALVVTVSYVG), 252 to 267 (IMLYSTSMIFLCFHLF), 283 to 303 (YSFSIYLLHAYFMIIGYVLLL), and 308 to 328 (IPAVPAVLLLFAVCTAGPIMT).

Belongs to the acyltransferase 3 family.

Its subcellular location is the cell membrane. The protein is Putative membrane-bound acyltransferase YfiQ (yfiQ) of Bacillus subtilis (strain 168).